A 101-amino-acid polypeptide reads, in one-letter code: UPF0125 protein VC_0850 (101 aa).

Belongs to the UPF0125 (RnfH) family.

The sequence is that of UPF0125 protein VC_0850 from Vibrio cholerae serotype O1 (strain ATCC 39315 / El Tor Inaba N16961).